The sequence spans 259 residues: Chymotrypsin-1 (259 aa).

The N-terminal stretch at 1-17 (MLRKVFAVVSVLLVVSA) is a signal peptide. Positions 18–32 (AKVTKLVLDDNYVNR) are cleaved as a propeptide — activation peptide. A Peptidase S1 domain is found at 33–255 (VVGGEVAKNG…YHDWVRTTMA (223 aa)). Cysteine 59 and cysteine 75 are joined by a disulfide. Catalysis depends on charge relay system residues histidine 74 and aspartate 119. 2 disulfides stabilise this stretch: cysteine 182–cysteine 198 and cysteine 208–cysteine 232. Catalysis depends on serine 212, which acts as the Charge relay system.

It belongs to the peptidase S1 family. After blood feeding, expression is induced in the midgut epithelium, followed by secretion into the midgut lumen.

It localises to the secreted. The enzyme catalyses Preferential cleavage: Tyr-|-Xaa, Trp-|-Xaa, Phe-|-Xaa, Leu-|-Xaa.. The polypeptide is Chymotrypsin-1 (CHYM1) (Anopheles gambiae (African malaria mosquito)).